Here is a 141-residue protein sequence, read N- to C-terminus: MAKKVSKLVKLQIPAGKANPAPPVGPALGQAGVNIMGFCKEFNARTQDQAGLIIPVVITVYEDRSFTFITKTPPAAVLLKKAAGIESGSGEPNRKKVATVKRDKVREIAELKMPDLNASSVETAMLMVEGTARSMGIVIED.

This sequence belongs to the universal ribosomal protein uL11 family. As to quaternary structure, part of the ribosomal stalk of the 50S ribosomal subunit. Interacts with L10 and the large rRNA to form the base of the stalk. L10 forms an elongated spine to which L12 dimers bind in a sequential fashion forming a multimeric L10(L12)X complex. Post-translationally, one or more lysine residues are methylated.

Functionally, forms part of the ribosomal stalk which helps the ribosome interact with GTP-bound translation factors. This is Large ribosomal subunit protein uL11 from Exiguobacterium sp. (strain ATCC BAA-1283 / AT1b).